Here is a 365-residue protein sequence, read N- to C-terminus: Alternative oxidase 2, mitochondrial (365 aa).

Positions Thr32–Ala46 are enriched in low complexity. The tract at residues Thr32–His52 is disordered. Fe cation contacts are provided by Glu166, Glu205, and His208. Residues Trp220–Leu242 form a helical membrane-spanning segment. 4 residues coordinate Fe cation: Glu256, Glu257, Glu312, and His315. A disordered region spans residues Gln345–Leu365.

It belongs to the alternative oxidase family. The cofactor is Fe cation.

Its subcellular location is the mitochondrion inner membrane. Its function is as follows. Catalyzes cyanide-resistant oxygen consumption. May increase respiration when the cytochrome respiratory pathway is restricted, or in response to low temperatures. This chain is Alternative oxidase 2, mitochondrial (AOX2), found in Candida albicans (Yeast).